The sequence spans 271 residues: Probable iron transport system membrane protein HI_0359 (271 aa).

The next 8 helical transmembrane spans lie at Ala17–Leu37, Ile55–Phe75, Thr93–Ile113, Ser131–Phe151, Val168–Ile188, Val194–Leu214, Met221–Tyr241, and Ala245–Tyr265.

It belongs to the ABC-3 integral membrane protein family.

It localises to the cell inner membrane. Functionally, part of an ATP-driven transport system HI_0359/HI_0360/HI_0361/HI_0362 for iron. The protein is Probable iron transport system membrane protein HI_0359 of Haemophilus influenzae (strain ATCC 51907 / DSM 11121 / KW20 / Rd).